Consider the following 218-residue polypeptide: Recombination protein RecR (218 aa).

The segment at 56–71 (CRICCNISREEVCRIC) adopts a C4-type zinc-finger fold. In terms of domain architecture, Toprim spans 79–195 (STICVVEEPK…VVSRLASGMP (117 aa)).

This sequence belongs to the RecR family.

Functionally, may play a role in DNA repair. It seems to be involved in an RecBC-independent recombinational process of DNA repair. It may act with RecF and RecO. In Corynebacterium diphtheriae (strain ATCC 700971 / NCTC 13129 / Biotype gravis), this protein is Recombination protein RecR.